We begin with the raw amino-acid sequence, 341 residues long: Fructose-1,6-bisphosphatase, cytosolic (341 aa).

Residues Glu-71, Glu-100, Asp-121, Leu-123, and Asp-124 each coordinate Mg(2+). Residues 124–127, Asn-215, Tyr-247, Tyr-267, and Lys-277 each bind substrate; that span reads DGSF. Glu-283 contacts Mg(2+).

It belongs to the FBPase class 1 family. It depends on Mg(2+) as a cofactor.

The protein localises to the cytoplasm. The enzyme catalyses beta-D-fructose 1,6-bisphosphate + H2O = beta-D-fructose 6-phosphate + phosphate. This Pisum sativum (Garden pea) protein is Fructose-1,6-bisphosphatase, cytosolic.